Consider the following 844-residue polypeptide: Putative ubiquitin thioesterase 232R (844 aa).

Disordered stretches follow at residues 136–223, 261–287, 326–377, and 422–541; these read NSST…DEAE, SRRK…PPME, LLNG…PELT, and QKKQ…KLSV. The span at 137 to 216 shows a compositional bias: low complexity; that stretch reads SSTRSRSPSV…PSRQSVRQSS (80 aa). Low complexity-rich tracts occupy residues 332–341 and 354–364; these read RPSPSLPQSR and RSPSVGSPSVR. Over residues 429-438 the composition is skewed to pro residues; that stretch reads SPSPTPPSPV. The segment covering 472–485 has biased composition (basic and acidic residues); the sequence is VQKKMGKSGEREPK. Positions 504 to 518 are enriched in low complexity; it reads SLRSRLSTQQQTQQS. Positions 526 to 535 are enriched in basic and acidic residues; that stretch reads ESIKPEESVR. Residues 590-725 form the OTU domain; it reads YTVKQVSGDG…NYHYTSLVPI (136 aa). Residue Asp-598 is part of the active site. The active-site Nucleophile is Cys-601. His-718 is an active-site residue.

The catalysed reaction is Thiol-dependent hydrolysis of ester, thioester, amide, peptide and isopeptide bonds formed by the C-terminal Gly of ubiquitin (a 76-residue protein attached to proteins as an intracellular targeting signal).. Hydrolase that can remove conjugated ubiquitin from proteins and may therefore play an important regulatory role at the level of protein turnover by preventing degradation. The chain is Putative ubiquitin thioesterase 232R from Aedes vexans (Inland floodwater mosquito).